Consider the following 196-residue polypeptide: Small ribosomal subunit protein uS4c (196 aa).

The S4 RNA-binding domain maps to 89–150 (MRLDNIVFRL…NQRSKRLVQN (62 aa)).

The protein belongs to the universal ribosomal protein uS4 family. As to quaternary structure, part of the 30S ribosomal subunit. Contacts protein S5. The interaction surface between S4 and S5 is involved in control of translational fidelity.

The protein localises to the plastid. Its subcellular location is the chloroplast. Functionally, one of the primary rRNA binding proteins, it binds directly to 16S rRNA where it nucleates assembly of the body of the 30S subunit. With S5 and S12 plays an important role in translational accuracy. This chain is Small ribosomal subunit protein uS4c (rps4), found in Eleusine indica (Goosegrass).